The sequence spans 252 residues: Triosephosphate isomerase (252 aa).

Residue 10–12 (NWK) coordinates substrate. His-96 acts as the Electrophile in catalysis. Glu-168 acts as the Proton acceptor in catalysis. Residues Gly-174, Ser-214, and 235–236 (GG) each bind substrate.

It belongs to the triosephosphate isomerase family. In terms of assembly, homodimer.

The protein localises to the cytoplasm. It catalyses the reaction D-glyceraldehyde 3-phosphate = dihydroxyacetone phosphate. It participates in carbohydrate biosynthesis; gluconeogenesis. Its pathway is carbohydrate degradation; glycolysis; D-glyceraldehyde 3-phosphate from glycerone phosphate: step 1/1. Involved in the gluconeogenesis. Catalyzes stereospecifically the conversion of dihydroxyacetone phosphate (DHAP) to D-glyceraldehyde-3-phosphate (G3P). The protein is Triosephosphate isomerase of Streptococcus mutans serotype c (strain ATCC 700610 / UA159).